Here is a 171-residue protein sequence, read N- to C-terminus: Endoribonuclease YbeY (171 aa).

Zn(2+) is bound by residues histidine 126, histidine 130, and histidine 136.

Belongs to the endoribonuclease YbeY family. Requires Zn(2+) as cofactor.

The protein localises to the cytoplasm. In terms of biological role, single strand-specific metallo-endoribonuclease involved in late-stage 70S ribosome quality control and in maturation of the 3' terminus of the 16S rRNA. The chain is Endoribonuclease YbeY from Rhizobium etli (strain ATCC 51251 / DSM 11541 / JCM 21823 / NBRC 15573 / CFN 42).